Here is a 360-residue protein sequence, read N- to C-terminus: Phospho-N-acetylmuramoyl-pentapeptide-transferase (360 aa).

Over 1–25 the chain is Periplasmic; that stretch reads MLVWLAEHLVKYYSGFNVFSYLTFR. A helical membrane pass occupies residues 26 to 46; it reads AIVSLLTALFISLWMGPRMIA. The Cytoplasmic portion of the chain corresponds to 47–71; the sequence is HLQKLSFGQVVRNDGPESHFSKRGT. Residues 72–92 form a helical membrane-spanning segment; the sequence is PTMGGIMILTAIVISVLLWAY. Pro93 is a topological domain (periplasmic). Residues 94–114 form a helical membrane-spanning segment; it reads SNPYVWCVLVVLVGYGIIGFV. The Cytoplasmic segment spans residues 115 to 131; that stretch reads DDYRKVVRKDTKGLIAR. The helical transmembrane segment at 132 to 152 threads the bilayer; the sequence is WKYFWMSVIALGVAFALYLAG. The Periplasmic segment spans residues 153 to 167; that stretch reads KDTPATQLVVPFFKD. Residues 168–188 traverse the membrane as a helical segment; the sequence is VMPQLGLFYILLAYFVIVGTG. Topologically, residues 189 to 198 are cytoplasmic; that stretch reads NAVNLTDGLD. The chain crosses the membrane as a helical span at residues 199-219; that stretch reads GLAIMPTVFVAGGFALVAWAT. Residues 220 to 235 are Periplasmic-facing; it reads GNMNFASYLHIPYLRH. The chain crosses the membrane as a helical span at residues 236–256; the sequence is AGELVIVCTAIVGAGLGFLWF. Residues 257 to 262 lie on the Cytoplasmic side of the membrane; sequence NTYPAQ. Residues 263–283 form a helical membrane-spanning segment; that stretch reads VFMGDVGSLALGGALGIIAVL. The Periplasmic portion of the chain corresponds to 284-287; the sequence is LRQE. Residues 288 to 308 traverse the membrane as a helical segment; that stretch reads FLLVIMGGVFVVETLSVILQV. The Cytoplasmic portion of the chain corresponds to 309–337; it reads GSFKLRGQRIFRMAPIHHHYELKGWPEPR. The helical transmembrane segment at 338-358 threads the bilayer; it reads VIVRFWIISLMLVLIGLATLK. Topologically, residues 359–360 are periplasmic; it reads VR.

It belongs to the glycosyltransferase 4 family. MraY subfamily. It depends on Mg(2+) as a cofactor.

It is found in the cell inner membrane. It carries out the reaction UDP-N-acetyl-alpha-D-muramoyl-L-alanyl-gamma-D-glutamyl-meso-2,6-diaminopimeloyl-D-alanyl-D-alanine + di-trans,octa-cis-undecaprenyl phosphate = di-trans,octa-cis-undecaprenyl diphospho-N-acetyl-alpha-D-muramoyl-L-alanyl-D-glutamyl-meso-2,6-diaminopimeloyl-D-alanyl-D-alanine + UMP. The protein operates within cell wall biogenesis; peptidoglycan biosynthesis. Functionally, catalyzes the initial step of the lipid cycle reactions in the biosynthesis of the cell wall peptidoglycan: transfers peptidoglycan precursor phospho-MurNAc-pentapeptide from UDP-MurNAc-pentapeptide onto the lipid carrier undecaprenyl phosphate, yielding undecaprenyl-pyrophosphoryl-MurNAc-pentapeptide, known as lipid I. This chain is Phospho-N-acetylmuramoyl-pentapeptide-transferase, found in Escherichia coli O7:K1 (strain IAI39 / ExPEC).